The following is a 764-amino-acid chain: MRYILDIKMEIVQEILDQLYRKVLLGTTLEDDVHGYIFYLNPDLSEQDGCPAFPVAQSNASGVLDGMAGQHGPSSHEVATLPGAQECPKRQLQMDRTREMKLLQLTVIDTMLSQVLSDETETHAKEGYRELTEVLLQSVELDSKLMRMLQNSDKLLSHMAAKCLASLLYFQLREKVRSQHKMLSNSWVTFCQKHLSESSESGEAVRCLWILTAVIKEILKDTHSQRAESLKQLLTPFDITFEVFYNSLFSQHFGDFQSPSNLASSLMCFLELLELLVASRIHLKLHFRSQRMLFLKPHALDILAWPIPAFIKRKLVILVKKCLLCKVGEDLCREPAPSLMSPDHLLDSDMLTLADTLLHAVHVGLWKALAVSGKPSCFGGDEVQPGCRLRTGPDHVTLRAASLITVKSLEIKSQNCTSAAEMKVALQTFMSELLAFLKPHLQPSLQPHNPCEWLSRVFIEQDDDMLEAAKASLSIYLQLTREWDASASLTQEKEAWIRSTHGHGCNPHCVFLFFLKNVAFDSTVLLDFLISSETCFLEYFVKYLKLLQKDWAHFLSICKFFAAVESQCGMLVHDPVPSPARGRSTSLTVPHAPASPVGENTCPWLPWASDASSESQSQVMMPKETLPVPANGPPSRTPQSLVDYDSSEASEEETTSEHLANSKQTSLCQERSEEIQGLPRTWEEQKEHSLEPLLSAESSSPFSAKGRVAADGTVWQVGLFLRTVKCLEELQGAIYRLQEKNLFPYNPAALLKLLKGVEAKCVNV.

Disordered regions lie at residues 615 to 668 and 682 to 702; these read SQSQ…TSLC and WEEQ…SSPF. Acidic residues predominate over residues 645–654; it reads DSSEASEEET. Ser650 bears the Phosphoserine mark. Over residues 658–668 the composition is skewed to polar residues; it reads HLANSKQTSLC. Positions 691–702 are enriched in low complexity; that stretch reads EPLLSAESSSPF.

It belongs to the protein lines family.

In Mus musculus (Mouse), this protein is Protein Lines homolog 1.